Here is a 103-residue protein sequence, read N- to C-terminus: MPEMVPTSYYLALSGVLFALGLIGVMTRRTAILIFLSVELMLNAANIALVAFARSWGDLMGQTAVFIVMTLAAAEVAIGLAIIVAIFRGRETTNVDDLAQLRG.

3 helical membrane-spanning segments follow: residues valine 5–valine 25, isoleucine 32–phenylalanine 52, and phenylalanine 66–isoleucine 86.

Belongs to the complex I subunit 4L family. NDH-1 is composed of 15 different subunits. Subunits NuoA, H, J, K, L, M, N constitute the membrane sector of the complex.

It localises to the cell membrane. It catalyses the reaction a quinone + NADH + 5 H(+)(in) = a quinol + NAD(+) + 4 H(+)(out). Its function is as follows. NDH-1 shuttles electrons from NADH, via FMN and iron-sulfur (Fe-S) centers, to quinones in the respiratory chain. The immediate electron acceptor for the enzyme in this species is believed to be a menaquinone. Couples the redox reaction to proton translocation (for every two electrons transferred, four hydrogen ions are translocated across the cytoplasmic membrane), and thus conserves the redox energy in a proton gradient. This Deinococcus radiodurans (strain ATCC 13939 / DSM 20539 / JCM 16871 / CCUG 27074 / LMG 4051 / NBRC 15346 / NCIMB 9279 / VKM B-1422 / R1) protein is NADH-quinone oxidoreductase subunit K.